Here is a 78-residue protein sequence, read N- to C-terminus: Probable [Fe-S]-dependent transcriptional repressor (78 aa).

4 residues coordinate iron-sulfur cluster: Cys-56, Cys-61, Cys-64, and Cys-70.

It belongs to the FeoC family.

Its function is as follows. May function as a transcriptional regulator that controls feoABC expression. The sequence is that of Probable [Fe-S]-dependent transcriptional repressor from Enterobacter sp. (strain 638).